We begin with the raw amino-acid sequence, 368 residues long: UPF0284 protein Tery_1555 (368 aa).

It belongs to the UPF0284 family.

This chain is UPF0284 protein Tery_1555, found in Trichodesmium erythraeum (strain IMS101).